We begin with the raw amino-acid sequence, 253 residues long: 5'-nucleotidase SurE (253 aa).

4 residues coordinate a divalent metal cation: aspartate 8, aspartate 9, serine 40, and asparagine 92.

Belongs to the SurE nucleotidase family. It depends on a divalent metal cation as a cofactor.

It is found in the cytoplasm. The enzyme catalyses a ribonucleoside 5'-phosphate + H2O = a ribonucleoside + phosphate. In terms of biological role, nucleotidase that shows phosphatase activity on nucleoside 5'-monophosphates. This Hyphomonas neptunium (strain ATCC 15444) protein is 5'-nucleotidase SurE.